The sequence spans 186 residues: Large ribosomal subunit protein uL5 (186 aa).

This sequence belongs to the universal ribosomal protein uL5 family. In terms of assembly, part of the 50S ribosomal subunit; part of the 5S rRNA/L5/L18/L25 subcomplex. Contacts the 5S rRNA and the P site tRNA. Forms a bridge to the 30S subunit in the 70S ribosome.

In terms of biological role, this is one of the proteins that bind and probably mediate the attachment of the 5S RNA into the large ribosomal subunit, where it forms part of the central protuberance. In the 70S ribosome it contacts protein S13 of the 30S subunit (bridge B1b), connecting the 2 subunits; this bridge is implicated in subunit movement. Contacts the P site tRNA; the 5S rRNA and some of its associated proteins might help stabilize positioning of ribosome-bound tRNAs. This is Large ribosomal subunit protein uL5 from Jannaschia sp. (strain CCS1).